The primary structure comprises 151 residues: Metalloproteinase inhibitor 3 (151 aa).

An NTR domain is found at 1-108; that stretch reads CNSDIVIRAK…GLNYRYHLGC (108 aa). Cystine bridges form between Cys1–Cys108, Cys115–Cys120, and Cys128–Cys149. An involved in metalloproteinase-binding region spans residues 53-54; that stretch reads ES. Positions 71 to 151 are mediates interaction with EFEMP1; sequence GRVYDGKVYT…YQSKHYACIR (81 aa).

Belongs to the protease inhibitor I35 (TIMP) family. As to quaternary structure, interacts with EFEMP1.

The protein localises to the secreted. The protein resides in the extracellular space. Its subcellular location is the extracellular matrix. Functionally, complexes with metalloproteinases (such as collagenases) and irreversibly inactivates them by binding to their catalytic zinc cofactor. May form part of a tissue-specific acute response to remodeling stimuli. This is Metalloproteinase inhibitor 3 (TIMP3) from Oryctolagus cuniculus (Rabbit).